The following is a 730-amino-acid chain: Actin filament-associated protein 1 (730 aa).

M1 carries the post-translational modification N-acetylmethionine. Positions 47–91 are disordered; the sequence is KDHAQKQETANSLPAPPQMPLPEIPQPWLPPDSGPPPLPTSSLPE. The span at 60–85 shows a compositional bias: pro residues; it reads PAPPQMPLPEIPQPWLPPDSGPPPLP. The SH3-binding signature appears at 71–74; sequence PQPW. The SH2-binding 1 signature appears at 94–97; that stretch reads YEEA. Residues 119–140 are disordered; it reads SSSYESYDEEEEDGKGKKTRHQ. The PH 1 domain maps to 153–249; sequence DAKICAFLLR…WLKVIKEAYS (97 aa). Positions 252–292 are disordered; sequence SGPVDSECPPPPSSPVHKAELEKKLSSERPSSDGEGVVENG. Residues 268–283 are compositionally biased toward basic and acidic residues; the sequence is HKAELEKKLSSERPSS. Phosphoserine occurs at positions 282 and 283. Positions 347 to 441 constitute a PH 2 domain; it reads DVPTCGYLNV…WIGILLAETG (95 aa). The SH2-binding 2 motif lies at 451 to 456; that stretch reads YDYIDV. Positions 512–537 are disordered; that stretch reads KGKKPPVASNGVTGKGKTLSSQPKKA. A Phosphoserine modification is found at S548. The stretch at 557 to 648 forms a coiled coil; sequence KNRVEADAKR…VKESLKKALA (92 aa). The tract at residues 594–637 is interaction with F-actin; sequence DLRAAIEVNAGRKPQAILEEKLKQLEEECRQKEAERVSLELELT. A phosphoserine mark is found at S664, S665, and S668. Residue T675 is modified to Phosphothreonine. Residues S679 and S687 each carry the phosphoserine modification.

Monomer and homomultimer. Interacts via its C-terminus with F-actin; probably involving AFAP1 multimers. Interacts with activated SRC SH3-SH2 domains. Interacts via its PH 1 domain with PRKCA, PRKCB and PRKCI. Phosphorylated on tyrosine residues by SRC. Low expression in normal breast epithelial cell line MCF-10A and in tumorigenic breast cancer cell lines MCF-7, T-47D and ZR-75-1. Highly expressed in the invasive breast cancer cell lines MDA-MB-231 and MDA-MB-435. Overexpressed in prostate carcinoma.

The protein resides in the cytoplasm. Its subcellular location is the cytoskeleton. The protein localises to the stress fiber. Functionally, can cross-link actin filaments into both network and bundle structures. May modulate changes in actin filament integrity and induce lamellipodia formation. May function as an adapter molecule that links other proteins, such as SRC and PKC to the actin cytoskeleton. Seems to play a role in the development and progression of prostate adenocarcinoma by regulating cell-matrix adhesions and migration in the cancer cells. This chain is Actin filament-associated protein 1 (AFAP1), found in Homo sapiens (Human).